Here is a 240-residue protein sequence, read N- to C-terminus: 1-(5-phosphoribosyl)-5-[(5-phosphoribosylamino)methylideneamino] imidazole-4-carboxamide isomerase 2 (240 aa).

Aspartate 8 (proton acceptor) is an active-site residue. Catalysis depends on aspartate 129, which acts as the Proton donor.

Belongs to the HisA/HisF family.

It is found in the cytoplasm. It carries out the reaction 1-(5-phospho-beta-D-ribosyl)-5-[(5-phospho-beta-D-ribosylamino)methylideneamino]imidazole-4-carboxamide = 5-[(5-phospho-1-deoxy-D-ribulos-1-ylimino)methylamino]-1-(5-phospho-beta-D-ribosyl)imidazole-4-carboxamide. It functions in the pathway amino-acid biosynthesis; L-histidine biosynthesis; L-histidine from 5-phospho-alpha-D-ribose 1-diphosphate: step 4/9. The chain is 1-(5-phosphoribosyl)-5-[(5-phosphoribosylamino)methylideneamino] imidazole-4-carboxamide isomerase 2 from Ruegeria sp. (strain TM1040) (Silicibacter sp.).